The sequence spans 213 residues: MDTLWDISPPVSPATPVWPGDTPVSVERVWRMEAGSPVNVARLTLSPHTGAHCDAPLHYDADGAPIGAVPLDTYLGPCRVIHCIGAAPVVRPADIEAALDGVPPRVLLRTYARASVEQWDSGFCAVAPETVDLLAAHGVKLIGIDTPSLDPQESKTMDAHHRVRAHRMAILEGIVLDDVPPGDYELIALPLKFATLDASPVRAVLRALPGHSS.

Trp-18 lines the substrate pocket. Zn(2+)-binding residues include His-48, His-52, and Asp-54. The Proton donor/acceptor role is filled by His-58. Residues His-160 and Glu-172 each contribute to the Zn(2+) site.

This sequence belongs to the Cyclase 1 superfamily. KynB family. Homodimer. Requires Zn(2+) as cofactor.

It carries out the reaction N-formyl-L-kynurenine + H2O = L-kynurenine + formate + H(+). It functions in the pathway amino-acid degradation; L-tryptophan degradation via kynurenine pathway; L-kynurenine from L-tryptophan: step 2/2. Catalyzes the hydrolysis of N-formyl-L-kynurenine to L-kynurenine, the second step in the kynurenine pathway of tryptophan degradation. This is Kynurenine formamidase from Burkholderia ambifaria (strain ATCC BAA-244 / DSM 16087 / CCUG 44356 / LMG 19182 / AMMD) (Burkholderia cepacia (strain AMMD)).